The chain runs to 197 residues: Transcription factor FapR (197 aa).

This sequence belongs to the FapR family.

In terms of biological role, transcriptional factor involved in regulation of membrane lipid biosynthesis by repressing genes involved in fatty acid and phospholipid metabolism. The protein is Transcription factor FapR of Bacillus cereus (strain B4264).